Reading from the N-terminus, the 314-residue chain is uncharacterized protein (314 aa).

The signal sequence occupies residues 1 to 18 (MLIQILFLIILTLNCSYS). N-linked (GlcNAc...) asparagine glycans are attached at residues Asn68, Asn72, Asn106, and Asn256.

Its subcellular location is the secreted. This is an uncharacterized protein from Caenorhabditis elegans.